We begin with the raw amino-acid sequence, 150 residues long: UPF0540 protein At1g62080 (150 aa).

The N-terminal stretch at 1 to 21 (MNATKFLVLLVIGVLCAIVTA) is a signal peptide. A compositionally biased stretch (low complexity) spans 119 to 135 (AAAARAKGKVASASRVK). The tract at residues 119 to 150 (AAAARAKGKVASASRVKGSSEKKKKDRKGKKD) is disordered.

The protein belongs to the UPF0540 family.

The polypeptide is UPF0540 protein At1g62080 (Arabidopsis thaliana (Mouse-ear cress)).